The primary structure comprises 201 residues: DeSI-like protein sdu1 (201 aa).

Residues methionine 1–leucine 143 form the PPPDE domain. Catalysis depends on residues histidine 29 and cysteine 105. Residues glycine 146–proline 201 are disordered. Positions aspartate 152 to threonine 167 are enriched in acidic residues. Positions aspartate 191–proline 201 are enriched in polar residues.

The protein belongs to the DeSI family.

It localises to the cytoplasm. Its function is as follows. Has a role in meiosis. This Schizosaccharomyces pombe (strain 972 / ATCC 24843) (Fission yeast) protein is DeSI-like protein sdu1 (sdu1).